We begin with the raw amino-acid sequence, 217 residues long: Mucosal pentraxin (217 aa).

The first 19 residues, 1-19 (MEKLLLGVLLLAFLPEGMT), serve as a signal peptide directing secretion. In terms of domain architecture, Pentraxin (PTX) spans 24–217 (RGKVFIFPEQ…KGYVVVKPKL (194 aa)). A disulfide bridge links Cys55 with Cys114. The Ca(2+) site is built by Asp77, Asn78, Glu155, Gln156, Asp157, and Gln167.

The protein belongs to the pentraxin family. As to quaternary structure, homopentamer. Pentraxin (or pentaxin) have a discoid arrangement of 5 non-covalently bound subunits. Requires Ca(2+) as cofactor.

The protein resides in the secreted. The sequence is that of Mucosal pentraxin (MPTX) from Bos taurus (Bovine).